Consider the following 498-residue polypeptide: ADP,ATP carrier protein 1 (498 aa).

Residues 1–33 (MSTSKSENYLSELRKIIWPIEQYENKKFLPLAF) are Cytoplasmic-facing. Residues 34 to 54 (MMFCILLNYSTLRSIKDGFVV) traverse the membrane as a helical segment. Cys-37 and Cys-85 are disulfide-bonded. Over 55–67 (TDIGTESISFLKT) the chain is Extracellular. Residues 68–88 (YIVLPSAVIAMIIYVKLCDIL) form a helical membrane-spanning segment. The Cytoplasmic segment spans residues 89–92 (KQEN). Residues 93–113 (VFYVITSFFLGYFALFAFVLY) traverse the membrane as a helical segment. Residues 114–147 (PYPDLVHPDHKTIESLSLAYPNFKWFIKIVGKWS) lie on the Extracellular side of the membrane. Residues 148–168 (FASFYTIAELWGTMMLSLLFW) traverse the membrane as a helical segment. The Cytoplasmic portion of the chain corresponds to 169–184 (QFANQITKIAEAKRFY). Residues 185-205 (SMFGLLANLALPVTSVVIGYF) form a helical membrane-spanning segment. Topologically, residues 206-218 (LHEKTQIVAEHLK) are extracellular. The helical transmembrane segment at 219-239 (FVPLFVIMITSSFLIILTYRW) threads the bilayer. Over 240–279 (MNKNVLTDPRLYDPALVKEKKTKAKLSFIESLKMIFTSKY) the chain is Cytoplasmic. The helical transmembrane segment at 280-300 (VGYIALLIIAYGVSVNLVEGV) threads the bilayer. Residues 301 to 320 (WKSKVKELYPTKEAYTIYMG) lie on the Extracellular side of the membrane. Residues 321–341 (QFQFYQGWVAIAFMLIGSNIL) traverse the membrane as a helical segment. The Cytoplasmic segment spans residues 342 to 348 (RKVSWLT). A helical transmembrane segment spans residues 349 to 369 (AAMITPLMMFITGAAFFSFIF). Topologically, residues 370 to 379 (FDSVIAMNLT) are extracellular. A helical membrane pass occupies residues 380-400 (GILASSPLTLAVMIGMIQNVL). Topologically, residues 401–438 (SKGVKYSLFDATKNMAYIPLDKDLRVKGQAAVEVIGGR) are cytoplasmic. Residue 436-442 (GGRLGKS) participates in ATP binding. A helical membrane pass occupies residues 439 to 459 (LGKSGGAIIQSTFFILFPVFG). The Extracellular portion of the chain corresponds to 460 to 465 (FIEATP). A helical membrane pass occupies residues 466–486 (YFASIFFIIVILWIFAVKGLN). Over 487 to 498 (KEYQVLVNKNEK) the chain is Cytoplasmic.

This sequence belongs to the ADP/ATP translocase tlc family.

It is found in the cell membrane. Functionally, provides the rickettsial cell with host ATP in exchange for rickettsial ADP. This is an obligate exchange system. This energy acquiring activity is an important component of rickettsial parasitism. This chain is ADP,ATP carrier protein 1 (tlcA), found in Rickettsia prowazekii (strain Madrid E).